Here is a 433-residue protein sequence, read N- to C-terminus: Signal recognition particle 54 kDa protein (433 aa).

GTP contacts are provided by residues 106 to 113 (GVEGSGKT), 186 to 190 (DTAGR), and 244 to 247 (TKMD).

Belongs to the GTP-binding SRP family. SRP54 subfamily. As to quaternary structure, part of the signal recognition particle protein translocation system, which is composed of SRP and FtsY. Archaeal SRP consists of a 7S RNA molecule of 300 nucleotides and two protein subunits: SRP54 and SRP19.

It localises to the cytoplasm. The enzyme catalyses GTP + H2O = GDP + phosphate + H(+). In terms of biological role, involved in targeting and insertion of nascent membrane proteins into the cytoplasmic membrane. Binds to the hydrophobic signal sequence of the ribosome-nascent chain (RNC) as it emerges from the ribosomes. The SRP-RNC complex is then targeted to the cytoplasmic membrane where it interacts with the SRP receptor FtsY. The sequence is that of Signal recognition particle 54 kDa protein from Pyrobaculum arsenaticum (strain DSM 13514 / JCM 11321 / PZ6).